The following is a 472-amino-acid chain: 4-O-methyl-glucuronoyl methylesterase 1 (472 aa).

An N-terminal signal peptide occupies residues 1 to 20; it reads MKSAAYLAALAAVLPAYVNA. A CBM1 domain is found at 21-56; sequence QAQEWGQCGGIGWTGATTCVSGTVCTVLNPYYSQCL. Residues 62-97 are disordered; that stretch reads TAPPPPPPPPTSVSSSSSSSTSSAPPSGPSGTSPTC. A compositionally biased stretch (pro residues) spans 63-72; sequence APPPPPPPPT. Residues 73 to 96 show a composition bias toward low complexity; it reads SVSSSSSSSTSSAPPSGPSGTSPT. Cystine bridges form between Cys97–Cys131, Cys283–Cys419, and Cys315–Cys391. A GXSYXG catalytic site motif motif is present at residues 282–287; sequence GCSRDG. The active-site Nucleophile is Ser284. Substrate contacts are provided by Lys288, Gln330, Glu338, and Trp382. Residue His418 is the Proton donor/acceptor of the active site. N-linked (GlcNAc...) asparagine glycosylation occurs at Asn465.

The protein belongs to the carbohydrate esterase 15 (CE15) family.

Its subcellular location is the secreted. The catalysed reaction is a 4-O-methyl-alpha-D-glucuronosyl ester derivative + H2O = 4-O-methyl-alpha-D-glucuronate derivative + an alcohol + H(+). Glucuronoyl esterase which may play a significant role in biomass degradation, as it is considered to disconnect hemicellulose from lignin through the hydrolysis of the ester bond between 4-O-methyl-D-glucuronic acid residues of glucuronoxylans and aromatic alcohols of lignin. Can hydrolyze benzyl glucuronic acid (BnGlcA), allyl glucuronic acid (allylGlcA) and to a lower degree methyl glucuronic acid (MeGlcA) in vitro. This chain is 4-O-methyl-glucuronoyl methylesterase 1, found in Phanerochaete chrysosporium (strain RP-78 / ATCC MYA-4764 / FGSC 9002) (White-rot fungus).